Here is a 152-residue protein sequence, read N- to C-terminus: D-aminoacyl-tRNA deacylase (152 aa).

The short motif at 142–143 (GP) is the Gly-cisPro motif, important for rejection of L-amino acids element.

This sequence belongs to the DTD family. As to quaternary structure, homodimer.

The protein localises to the cytoplasm. The enzyme catalyses glycyl-tRNA(Ala) + H2O = tRNA(Ala) + glycine + H(+). It catalyses the reaction a D-aminoacyl-tRNA + H2O = a tRNA + a D-alpha-amino acid + H(+). An aminoacyl-tRNA editing enzyme that deacylates mischarged D-aminoacyl-tRNAs. Also deacylates mischarged glycyl-tRNA(Ala), protecting cells against glycine mischarging by AlaRS. Acts via tRNA-based rather than protein-based catalysis; rejects L-amino acids rather than detecting D-amino acids in the active site. By recycling D-aminoacyl-tRNA to D-amino acids and free tRNA molecules, this enzyme counteracts the toxicity associated with the formation of D-aminoacyl-tRNA entities in vivo and helps enforce protein L-homochirality. This Burkholderia cenocepacia (strain HI2424) protein is D-aminoacyl-tRNA deacylase.